The chain runs to 790 residues: Ice-structuring glycoprotein (790 aa).

The propeptide occupies 1 to 5; it reads VTAAP.

O-glycosylated; contains disaccharide galactose-N-acetylgalactosamine attached to threonines in AFGP8 and AFGP7. In terms of tissue distribution, synthesized by the liver and secreted into the blood from which they become distributed to almost the entire extracellular space.

The protein resides in the secreted. In terms of biological role, antifreeze proteins lower the blood freezing point. In Notothenia neglecta (Yellowbelly rockcod), this protein is Ice-structuring glycoprotein (afgp8).